A 102-amino-acid polypeptide reads, in one-letter code: Membrane-bound protein LytA (102 aa).

The first 16 residues, 1–16 (MKKFIALLFFILLLSG), serve as a signal peptide directing secretion. The N-palmitoyl cysteine moiety is linked to residue Cys17. Cys17 is lipidated: S-diacylglycerol cysteine.

It localises to the cell membrane. In terms of biological role, possible role in the secretion of LytB and LytC. This Bacillus subtilis (strain 168) protein is Membrane-bound protein LytA (lytA).